A 332-amino-acid chain; its full sequence is CMRF35-like molecule 1 (332 aa).

Positions 1 to 18 (MHLSLLALFLFWISGCFT) are cleaved as a signal peptide. At 19–181 (AQDPVTGPEE…GDGNGFLDLS (163 aa)) the chain is on the extracellular side. Residues 22–125 (PVTGPEEVSG…YDHMFKVHVS (104 aa)) enclose the Ig-like V-type domain. Intrachain disulfides connect Cys41–Cys109 and Cys55–Cys63. Asn89 is a glycosylation site (N-linked (GlcNAc...) asparagine). A helical transmembrane segment spans residues 182–202 (VLLPVISAALLLLLLVVSLIA). At 203–332 (WRMVRRQKKA…EYSSIRRPMP (130 aa)) the chain is on the cytoplasmic side. 2 disordered regions span residues 251-270 (PRTS…KDHQ) and 313-332 (PRTN…RPMP).

Belongs to the CD300 family. As to quaternary structure, interacts with PTPN6/SHP-1 in a tyrosine phosphorylation dependent manner. Interacts with IL4R. Post-translationally, phosphorylated on tyrosine.

The protein localises to the cell membrane. Acts as an inhibitory receptor for myeloid cells and mast cells. Positively regulates the phagocytosis of apoptotic cells (efferocytosis) via phosphatidylserine (PS) recognition; recognizes and binds PS as a ligand which is expressed on the surface of apoptotic cells. Plays an important role in the maintenance of immune homeostasis, by promoting macrophage-mediated efferocytosis and by inhibiting dendritic cell-mediated efferocytosis. Negatively regulates Fc epsilon receptor-dependent mast cell activation and allergic responses via binding to ceramide and sphingomyelin which act as ligands. May act as a coreceptor for interleukin 4 (IL-4). Associates with and regulates IL-4 receptor alpha-mediated responses by augmenting IL-4- and IL-13-induced signaling. Negatively regulates the Toll-like receptor (TLR) signaling mediated by MYD88 and TRIF through activation of PTPN6/SHP-1 and PTPN11/SHP-2. Inhibits osteoclast formation. Induces macrophage cell death upon engagement. The sequence is that of CMRF35-like molecule 1 (Cd300lf) from Rattus norvegicus (Rat).